The primary structure comprises 178 residues: tRNA (cytidine(56)-2'-O)-methyltransferase (178 aa).

Residue Leu88 coordinates S-adenosyl-L-methionine.

The protein belongs to the aTrm56 family. As to quaternary structure, homodimer.

It localises to the cytoplasm. It catalyses the reaction cytidine(56) in tRNA + S-adenosyl-L-methionine = 2'-O-methylcytidine(56) in tRNA + S-adenosyl-L-homocysteine + H(+). Its function is as follows. Specifically catalyzes the AdoMet-dependent 2'-O-ribose methylation of cytidine at position 56 in tRNAs. The chain is tRNA (cytidine(56)-2'-O)-methyltransferase from Methanopyrus kandleri (strain AV19 / DSM 6324 / JCM 9639 / NBRC 100938).